A 312-amino-acid chain; its full sequence is Methionyl-tRNA formyltransferase (312 aa).

Ser-110–Pro-113 serves as a coordination point for (6S)-5,6,7,8-tetrahydrofolate.

This sequence belongs to the Fmt family.

The catalysed reaction is L-methionyl-tRNA(fMet) + (6R)-10-formyltetrahydrofolate = N-formyl-L-methionyl-tRNA(fMet) + (6S)-5,6,7,8-tetrahydrofolate + H(+). Functionally, attaches a formyl group to the free amino group of methionyl-tRNA(fMet). The formyl group appears to play a dual role in the initiator identity of N-formylmethionyl-tRNA by promoting its recognition by IF2 and preventing the misappropriation of this tRNA by the elongation apparatus. This is Methionyl-tRNA formyltransferase from Mycobacterium marinum (strain ATCC BAA-535 / M).